Here is a 157-residue protein sequence, read N- to C-terminus: Transcriptional repressor NrdR (157 aa).

A disordered region spans residues M1–N21. A zinc finger lies at C3–C34. Residues L49–A139 enclose the ATP-cone domain.

Belongs to the NrdR family. Zn(2+) is required as a cofactor.

Negatively regulates transcription of bacterial ribonucleotide reductase nrd genes and operons by binding to NrdR-boxes. The sequence is that of Transcriptional repressor NrdR from Ligilactobacillus salivarius (strain UCC118) (Lactobacillus salivarius).